The following is a 317-amino-acid chain: Transcriptional activator protein med (317 aa).

The signal sequence occupies residues 1–17 (MITRLVMIFSVLLLLSG). C18 carries N-palmitoyl cysteine lipidation. C18 carries S-diacylglycerol cysteine lipidation.

It belongs to the BMP lipoprotein family.

It localises to the cell membrane. In terms of biological role, positive activator of the comK gene. In Bacillus subtilis (strain 168), this protein is Transcriptional activator protein med (med).